The chain runs to 357 residues: Arginine kinase Met e 2 (357 aa).

Residues 9-91 (KLEAGFKKLE…FDPIIEDYHV (83 aa)) enclose the Phosphagen kinase N-terminal domain. 64-68 (GVGIY) contributes to the L-arginine binding site. The Phosphagen kinase C-terminal domain maps to 119-356 (FVISTRVRCG…LELIKIEKEM (238 aa)). Residues 122–126 (STRVR) and His185 each bind ATP. Residue Glu225 coordinates L-arginine. Residue Arg229 participates in ATP binding. Cys271 contributes to the L-arginine binding site. ATP is bound by residues 280–284 (RASVH) and 309–314 (RGTRGE). Residue Glu314 participates in L-arginine binding.

This sequence belongs to the ATP:guanido phosphotransferase family.

It carries out the reaction L-arginine + ATP = N(omega)-phospho-L-arginine + ADP + H(+). In terms of biological role, catalyzes the reversible transfer of high energy ATP gamma-phosphate group to L-arginine. The polypeptide is Arginine kinase Met e 2 (Metapenaeus ensis (Greasyback shrimp)).